Reading from the N-terminus, the 352-residue chain is Aspartic protease Bla g 2 (352 aa).

The N-terminal stretch at methionine 1–alanine 19 is a signal peptide. The propeptide at alanine 20–arginine 24 is removed in mature form. A Peptidase A1 domain is found at tyrosine 39 to glycine 346. Aspartate 55 is a catalytic residue. Disulfide bonds link cysteine 59–cysteine 151, cysteine 68–cysteine 73, and cysteine 75–cysteine 136. Residue asparagine 117 is glycosylated (N-linked (GlcNAc...) asparagine). 2 residues coordinate Zn(2+): histidine 178 and histidine 186. Residue aspartate 239 is part of the active site. Disulfide bonds link cysteine 261/cysteine 272 and cysteine 276/cysteine 309. Residue asparagine 295 is glycosylated (N-linked (GlcNAc...) asparagine). Residues aspartate 326 and aspartate 330 each contribute to the Zn(2+) site. N-linked (GlcNAc...) asparagine glycosylation is present at asparagine 340.

This sequence belongs to the peptidase A1 family. In terms of assembly, homodimer.

Its function is as follows. Functions as a digestive enzyme in the cockroach. The protein is Aspartic protease Bla g 2 of Blattella germanica (German cockroach).